A 356-amino-acid polypeptide reads, in one-letter code: tRNA N6-adenosine threonylcarbamoyltransferase (356 aa).

Fe cation-binding residues include H115 and H119. Substrate contacts are provided by residues 138–142 (LVSGG), D171, G184, and N283. D311 is a Fe cation binding site.

It belongs to the KAE1 / TsaD family. Fe(2+) is required as a cofactor.

Its subcellular location is the cytoplasm. The enzyme catalyses L-threonylcarbamoyladenylate + adenosine(37) in tRNA = N(6)-L-threonylcarbamoyladenosine(37) in tRNA + AMP + H(+). Its function is as follows. Required for the formation of a threonylcarbamoyl group on adenosine at position 37 (t(6)A37) in tRNAs that read codons beginning with adenine. Is involved in the transfer of the threonylcarbamoyl moiety of threonylcarbamoyl-AMP (TC-AMP) to the N6 group of A37, together with TsaE and TsaB. TsaD likely plays a direct catalytic role in this reaction. This Prochlorococcus marinus (strain MIT 9313) protein is tRNA N6-adenosine threonylcarbamoyltransferase.